A 727-amino-acid chain; its full sequence is Bromodomain-containing protein C631.02 (727 aa).

Disordered stretches follow at residues 27–231 and 341–369; these read AATI…PPMT and TSYS…AAMY. The segment covering 56–68 has biased composition (acidic residues); that stretch reads ENDDGTLDLFGDS. Residues 69-78 are compositionally biased toward basic and acidic residues; it reads ELEKEQKGDN. The segment covering 102–114 has biased composition (polar residues); it reads PSSPTHPSVSNIT. Over residues 128–150 the composition is skewed to basic and acidic residues; the sequence is EEEKSSESLDSHTHPPKRVRNED. A compositionally biased stretch (polar residues) spans 153-177; the sequence is LTFSKTSPVSPSSLKDGASNTVTND. Phosphoserine is present on S162. The span at 206–231 shows a compositional bias: basic and acidic residues; the sequence is SKEHSSPHDETVKKEENDKDQYPPMT. The region spanning 229 to 335 is the Bromo 1 domain; the sequence is PMTKEQHKYI…ATFERQLKQL (107 aa). One can recognise a Bromo 2 domain in the interval 388 to 497; it reads RKDAAEMKFC…SIFQKLWANK (110 aa). The NET domain maps to 570–650; it reads RSLSVDIYPP…KGDEIGAEAL (81 aa). The segment at 699–727 is disordered; it reads IAAYNTKSLGSDDSSSEDDGESSESSDSA. Residues 712–727 are compositionally biased toward acidic residues; sequence SSSEDDGESSESSDSA.

Belongs to the BET family.

The protein localises to the nucleus. This Schizosaccharomyces pombe (strain 972 / ATCC 24843) (Fission yeast) protein is Bromodomain-containing protein C631.02.